A 466-amino-acid chain; its full sequence is GTPase Der (466 aa).

2 EngA-type G domains span residues 3 to 166 and 177 to 350; these read PVIA…PEIP and IKIA…QSAT. GTP-binding positions include 9–16, 56–60, 118–121, 183–190, 230–234, and 295–298; these read GRPNVGKS, DTGGI, NKID, DTAGV, and NKWD. In terms of domain architecture, KH-like spans 351 to 435; sequence DRFSTNYLTR…PIRIEFRTTD (85 aa). Residues 442–466 form a disordered region; sequence KKSMTRQQFIQKRRKEERDRNNPRR. The segment covering 455-466 has biased composition (basic and acidic residues); sequence RKEERDRNNPRR.

This sequence belongs to the TRAFAC class TrmE-Era-EngA-EngB-Septin-like GTPase superfamily. EngA (Der) GTPase family. As to quaternary structure, associates with the 50S ribosomal subunit.

In terms of biological role, GTPase that plays an essential role in the late steps of ribosome biogenesis. The chain is GTPase Der from Cellvibrio japonicus (strain Ueda107) (Pseudomonas fluorescens subsp. cellulosa).